The following is a 473-amino-acid chain: Glutamate--tRNA ligase (473 aa).

The short motif at 13–23 (PSPTGFLHVGG) is the 'HIGH' region element. Positions 240 to 244 (KLSKR) match the 'KMSKS' region motif. Lys243 is a binding site for ATP.

Belongs to the class-I aminoacyl-tRNA synthetase family. Glutamate--tRNA ligase type 1 subfamily. In terms of assembly, monomer.

It localises to the cytoplasm. It catalyses the reaction tRNA(Glu) + L-glutamate + ATP = L-glutamyl-tRNA(Glu) + AMP + diphosphate. Catalyzes the attachment of glutamate to tRNA(Glu) in a two-step reaction: glutamate is first activated by ATP to form Glu-AMP and then transferred to the acceptor end of tRNA(Glu). This Shewanella denitrificans (strain OS217 / ATCC BAA-1090 / DSM 15013) protein is Glutamate--tRNA ligase.